The following is a 1465-amino-acid chain: DNA polymerase III PolC-type (1465 aa).

The 157-residue stretch at 427–583 (YVVFDVETTG…YDAEATGRLL (157 aa)) folds into the Exonuclease domain.

This sequence belongs to the DNA polymerase type-C family. PolC subfamily.

The protein resides in the cytoplasm. The catalysed reaction is DNA(n) + a 2'-deoxyribonucleoside 5'-triphosphate = DNA(n+1) + diphosphate. Required for replicative DNA synthesis. This DNA polymerase also exhibits 3' to 5' exonuclease activity. The protein is DNA polymerase III PolC-type of Streptococcus pyogenes serotype M18 (strain MGAS8232).